Reading from the N-terminus, the 143-residue chain is Peptide methionine sulfoxide reductase MsrB (143 aa).

Residues 16–139 (DAELRRRLTP…NSAALNFESR (124 aa)) form the MsrB domain. Cys-55, Cys-58, Cys-104, and Cys-107 together coordinate Zn(2+). Cys-128 functions as the Nucleophile in the catalytic mechanism.

This sequence belongs to the MsrB Met sulfoxide reductase family. Zn(2+) serves as cofactor.

It carries out the reaction L-methionyl-[protein] + [thioredoxin]-disulfide + H2O = L-methionyl-(R)-S-oxide-[protein] + [thioredoxin]-dithiol. The protein is Peptide methionine sulfoxide reductase MsrB of Burkholderia cenocepacia (strain HI2424).